The chain runs to 367 residues: Heme A synthase (367 aa).

A run of 5 helical transmembrane segments spans residues 25–45 (ALRFWLGFVLLALFCLVLVGG), 111–131 (LIARGIGVIFALPLLYFWLTG), 139–159 (WPLVGILALGGLQGFIGWWMV), 174–194 (LATHLVMACLIFAGCMWIMRG), and 210–230 (GFAATIAIFALFQIYLGALVA). Histidine 274 is a heme binding site. Helical transmembrane passes span 276–296 (IGAYTLFALTLINMVIALRAA), 305–325 (AVVLFSLVTLQAAIGIATLLM), and 327–347 (VPLHWGLLHQAGALVVFGFAI). Histidine 335 contacts heme.

It belongs to the COX15/CtaA family. Type 2 subfamily. Interacts with CtaB. Heme b is required as a cofactor.

The protein resides in the cell membrane. It catalyses the reaction Fe(II)-heme o + 2 A + H2O = Fe(II)-heme a + 2 AH2. Its pathway is porphyrin-containing compound metabolism; heme A biosynthesis; heme A from heme O: step 1/1. Catalyzes the conversion of heme O to heme A by two successive hydroxylations of the methyl group at C8. The first hydroxylation forms heme I, the second hydroxylation results in an unstable dihydroxymethyl group, which spontaneously dehydrates, resulting in the formyl group of heme A. The polypeptide is Heme A synthase (Rhizobium leguminosarum bv. trifolii (strain WSM2304)).